We begin with the raw amino-acid sequence, 389 residues long: Succinate--CoA ligase [ADP-forming] subunit beta (389 aa).

In terms of domain architecture, ATP-grasp spans 9–244 (KQLLAEYGIP…KTQEDETEVT (236 aa)). ATP is bound by residues Lys-46, 53–55 (GRG), Gly-102, and Glu-107. Mg(2+)-binding residues include Asn-199 and Asp-213. Substrate contacts are provided by residues Asn-264 and 321 to 323 (GIV).

The protein belongs to the succinate/malate CoA ligase beta subunit family. Heterotetramer of two alpha and two beta subunits. It depends on Mg(2+) as a cofactor.

The catalysed reaction is succinate + ATP + CoA = succinyl-CoA + ADP + phosphate. The enzyme catalyses GTP + succinate + CoA = succinyl-CoA + GDP + phosphate. The protein operates within carbohydrate metabolism; tricarboxylic acid cycle; succinate from succinyl-CoA (ligase route): step 1/1. Functionally, succinyl-CoA synthetase functions in the citric acid cycle (TCA), coupling the hydrolysis of succinyl-CoA to the synthesis of either ATP or GTP and thus represents the only step of substrate-level phosphorylation in the TCA. The beta subunit provides nucleotide specificity of the enzyme and binds the substrate succinate, while the binding sites for coenzyme A and phosphate are found in the alpha subunit. In Xanthomonas campestris pv. campestris (strain 8004), this protein is Succinate--CoA ligase [ADP-forming] subunit beta.